Here is a 158-residue protein sequence, read N- to C-terminus: Protein E6 (158 aa).

2 zinc fingers span residues 32–68 (CVYCRRQLQRTEVYEFAFGDLNVVYRDGVPLAACQSC) and 105–141 (CMCCLKPLSPAEKLRHLNSKRRFHKIAGNFTGQCRHC). Residues 156-158 (TQV) carry the PDZ-binding domain motif.

It belongs to the papillomaviridae E6 protein family. Forms homodimers. Interacts with ubiquitin-protein ligase UBE3A/E6-AP; this interaction stimulates UBE3A ubiquitin activity. Interacts with host BAK1.

It is found in the host cytoplasm. The protein localises to the host nucleus. In terms of biological role, plays a major role in the induction and maintenance of cellular transformation. E6 associates with host UBE3A/E6-AP ubiquitin-protein ligase and modulates its activity. Protects host keratinocytes from apoptosis by mediating the degradation of host BAK1. May also inhibit host immune response. This chain is Protein E6, found in Homo sapiens (Human).